The chain runs to 72 residues: Lantibiotic Flvbeta.g (72 aa).

Positions 1 to 34 (MNNNNFDMEKFKKLAAIVSEGEIDEMLDETTVGA) are cleaved as a propeptide — cleaved by FlvT. The lanthionine (Ser-Cys); by FlvM2 cross-link spans 36–40 (STLPC). 2,3-didehydrobutyrine; by FlvM2 occurs at positions 37, 46, and 48. Cross-links (beta-methyllanthionine (Thr-Cys); by FlvM2) lie at residues 55–61 (TTGFDWC), 63–66 (TGAC), and 67–70 (THSC).

Post-translationally, contains LL-lanthionine and DL-beta-methyllanthionine, when coepressed in E.coli with the flavecin synthetase FlvM2.

It localises to the secreted. Lanthionine-containing peptide antibiotic (lantibiotic) that is probably weakly active on Gram-positive bacteria, since its analog [Del1]Flvbeta.g shows weak antibacterial activity against M.luteus. This activity is synergistically enhanced by [Del2]Flvalpha.a, an analog of Flvalpha.a, which is encoded by the same operon than Flvbeta.g. The bactericidal activity of lantibiotics is based on depolarization of energized bacterial cytoplasmic membranes, initiated by the formation of aqueous transmembrane pores. This is Lantibiotic Flvbeta.g from Ruminococcus flavefaciens.